The following is a 329-amino-acid chain: DNA-directed RNA polymerase subunit alpha (329 aa).

The interval 1 to 235 (MQGSVTEFLK…EQLEAFVDLR (235 aa)) is alpha N-terminal domain (alpha-NTD). The segment at 249–329 (FDPILLRPVD…NWPPASIADE (81 aa)) is alpha C-terminal domain (alpha-CTD).

This sequence belongs to the RNA polymerase alpha chain family. Homodimer. The RNAP catalytic core consists of 2 alpha, 1 beta, 1 beta' and 1 omega subunit. When a sigma factor is associated with the core the holoenzyme is formed, which can initiate transcription.

The catalysed reaction is RNA(n) + a ribonucleoside 5'-triphosphate = RNA(n+1) + diphosphate. DNA-dependent RNA polymerase catalyzes the transcription of DNA into RNA using the four ribonucleoside triphosphates as substrates. This Sodalis glossinidius (strain morsitans) protein is DNA-directed RNA polymerase subunit alpha.